The primary structure comprises 451 residues: POU domain, class 3, transcription factor 1 (451 aa).

Disordered regions lie at residues 1–21 (MATT…GTGP), 69–114 (AHPQ…GFHA), 134–154 (AHHL…HQPQ), 186–253 (GLHH…PSSD), and 395–451 (KRMT…GSVQ). Gly residues-rich tracts occupy residues 11–20 (GPGGGAGGTG), 76–85 (TGGGGGGDWA), and 95–112 (AGGG…GGGF). Residues 134–145 (AHHLGPAMSPSP) are compositionally biased toward low complexity. The segment covering 190 to 199 (ALHEDGHEAQ) has biased composition (basic and acidic residues). Residues 220–232 (AGGLHAAAAHLHP) show a composition bias toward low complexity. Positions 247–321 (EDAPSSDDLE…LLNKWLEETD (75 aa)) constitute a POU-specific domain. The homeobox DNA-binding region spans 339–398 (KRKKRTSIEVGVKGALESHFLKCPKPSAHEITGLADSLQLEKEVVRVWFCNRRQKEKRMT). The segment covering 427–436 (PSAPPPPPPA) has biased composition (pro residues).

It belongs to the POU transcription factor family. Class-3 subfamily. Neural tissues and testis.

The protein resides in the nucleus. In terms of biological role, transcription factor that binds to the octamer motif (5'-ATTTGCAT-3'). Acts as a transcriptional activator when binding cooperatively with SOX4, SOX11, or SOX12 to gene promoters. Acts as a transcriptional repressor of myelin-specific genes. The protein is POU domain, class 3, transcription factor 1 (Pou3f1) of Rattus norvegicus (Rat).